The chain runs to 330 residues: uncharacterized protein (330 aa).

Position 125 to 132 (125 to 132 (GPPGCGKT)) interacts with ATP.

Belongs to the AAA ATPase family.

This is an uncharacterized protein from Sinorhizobium fredii (strain NBRC 101917 / NGR234).